The sequence spans 387 residues: Gibberellic acid methyltransferase 2 (387 aa).

S-adenosyl-L-homocysteine is bound at residue tyrosine 33. Residue glutamine 40 coordinates gibberellin A4. S-adenosyl-L-homocysteine is bound by residues cysteine 74, asparagine 79, aspartate 113, leucine 114, serine 146, and phenylalanine 147. Gibberellin A4 contacts are provided by histidine 167 and tryptophan 168. The Mg(2+) site is built by asparagine 185, arginine 275, aspartate 276, phenylalanine 278, and asparagine 279.

This sequence belongs to the methyltransferase superfamily. Type-7 methyltransferase family. SABATH subfamily. The cofactor is Mg(2+). As to expression, expressed in siliques and germinating seeds. Not detected in leaves, stems, flowers and roots.

The enzyme catalyses gibberellin A4 + S-adenosyl-L-methionine = O-methyl gibberellin A4 + S-adenosyl-L-homocysteine. Down-regulated by Zn(2+), Cu(2+) and Fe(3+). No effect of K(+), NH(4+), Na(+), Ca(2+), Mg(2+), Mn(2+) and Fe(2+). Functionally, methylates the carboxyl group of several gibberellins (GAs). Substrate preference is GA4 &gt; GA34 &gt; GA9 &gt; GA3 &gt; GA1 &gt; GA51 &gt; GA20. No activity with diterpenes abietic acid and ent-kaurenoic acid. The sequence is that of Gibberellic acid methyltransferase 2 (GAMT2) from Arabidopsis thaliana (Mouse-ear cress).